A 307-amino-acid polypeptide reads, in one-letter code: MTAHRSVLLVVHTGRDEATETARRVEKVLGDNKIALRVLSAEAVDRGSLHLAPDDMRAMGVEIEVVDADQHAADGCELVLVLGGDGTFLRAAELARNASIPVLGVNLGRIGFLAEAEAEAIDAVLEHVVAQDYRVEDRLTLDVVVRQGGRIVNRGWALNEVSLEKGPRLGVLGVVVEIDGRPVSAFGCDGVLVSTPTGSTAYAFSAGGPVLWPDLEAILVVPNNAHALFGRPMVTSPEATIAIEIEADGHDALVFCDGRREMLIPAGSRLEVTRCVTSVKWARLDSAPFTDRLVRKFRLPVTGWRGK.

Asp-85 serves as the catalytic Proton acceptor. NAD(+) contacts are provided by residues Asp-85–Gly-86, Arg-90, Asn-159–Glu-160, Asp-189, and Thr-200–Ser-205.

This sequence belongs to the NAD kinase family. Requires a divalent metal cation as cofactor.

Its subcellular location is the cytoplasm. It carries out the reaction NAD(+) + ATP = ADP + NADP(+) + H(+). In terms of biological role, involved in the regulation of the intracellular balance of NAD and NADP, and is a key enzyme in the biosynthesis of NADP. Catalyzes specifically the phosphorylation on 2'-hydroxyl of the adenosine moiety of NAD to yield NADP. This is NAD kinase from Mycobacterium bovis (strain ATCC BAA-935 / AF2122/97).